The chain runs to 122 residues: MIQHMTRLKVADNTGAKEVGVIKVLGGSKKRYASVGDIVVVSVKKATPAGLIAKGQMAKAVIVRTKKSIRRESGLLIRFDENACVLIKEDKTPRGSRIFGPVAREIRDRGYTKIASLAPEVL.

The protein belongs to the universal ribosomal protein uL14 family. As to quaternary structure, part of the 50S ribosomal subunit. Forms a cluster with proteins L3 and L19. In the 70S ribosome, L14 and L19 interact and together make contacts with the 16S rRNA in bridges B5 and B8.

Binds to 23S rRNA. Forms part of two intersubunit bridges in the 70S ribosome. In Ureaplasma parvum serovar 3 (strain ATCC 27815 / 27 / NCTC 11736), this protein is Large ribosomal subunit protein uL14.